The chain runs to 503 residues: Maturase K (503 aa).

The protein belongs to the intron maturase 2 family. MatK subfamily.

Its subcellular location is the plastid. It localises to the chloroplast. Functionally, usually encoded in the trnK tRNA gene intron. Probably assists in splicing its own and other chloroplast group II introns. This chain is Maturase K, found in Rhamnus cathartica (Common buckthorn).